The chain runs to 373 residues: Protein U3 (373 aa).

The protein belongs to the herpesviridae US22 family.

The chain is Protein U3 (U3) from Human herpesvirus 6A (strain Uganda-1102) (HHV-6 variant A).